Reading from the N-terminus, the 439-residue chain is 3-phosphoshikimate 1-carboxyvinyltransferase (439 aa).

3-phosphoshikimate-binding residues include Lys-29, Ser-30, and Arg-34. Residue Lys-29 coordinates phosphoenolpyruvate. Residues Gly-100 and Arg-128 each coordinate phosphoenolpyruvate. Ser-173, Ser-174, Gln-175, Ser-201, Asp-321, and Lys-348 together coordinate 3-phosphoshikimate. Gln-175 contributes to the phosphoenolpyruvate binding site. The active-site Proton acceptor is the Asp-321. Arg-352 and Arg-395 together coordinate phosphoenolpyruvate.

The protein belongs to the EPSP synthase family. Monomer.

It is found in the cytoplasm. It catalyses the reaction 3-phosphoshikimate + phosphoenolpyruvate = 5-O-(1-carboxyvinyl)-3-phosphoshikimate + phosphate. Its pathway is metabolic intermediate biosynthesis; chorismate biosynthesis. Catalyzes the transfer of the enolpyruvyl moiety of phosphoenolpyruvate (PEP) to the 5-hydroxyl of shikimate-3-phosphate (S3P) to produce enolpyruvyl shikimate-3-phosphate and inorganic phosphate. The protein is 3-phosphoshikimate 1-carboxyvinyltransferase of Halobacterium salinarum (strain ATCC 700922 / JCM 11081 / NRC-1) (Halobacterium halobium).